Here is a 186-residue protein sequence, read N- to C-terminus: Ribosome-recycling factor (186 aa).

It belongs to the RRF family.

It is found in the cytoplasm. Functionally, responsible for the release of ribosomes from messenger RNA at the termination of protein biosynthesis. May increase the efficiency of translation by recycling ribosomes from one round of translation to another. The chain is Ribosome-recycling factor from Burkholderia lata (strain ATCC 17760 / DSM 23089 / LMG 22485 / NCIMB 9086 / R18194 / 383).